A 438-amino-acid chain; its full sequence is GTPase Der (438 aa).

EngA-type G domains are found at residues 4-168 and 177-352; these read PIVA…NDPS and IRIA…DNYS. Residues 10-17, 57-61, 120-123, 183-190, 230-234, and 295-298 each bind GTP; these read GRPNVGKS, DTGGI, NKID, GKPNVGKS, DTAGL, and NKWD. The 85-residue stretch at 353–437 folds into the KH-like domain; sequence KRVSTGLLND…GIEIEYRARK (85 aa).

It belongs to the TRAFAC class TrmE-Era-EngA-EngB-Septin-like GTPase superfamily. EngA (Der) GTPase family. In terms of assembly, associates with the 50S ribosomal subunit.

In terms of biological role, GTPase that plays an essential role in the late steps of ribosome biogenesis. This chain is GTPase Der, found in Clostridium perfringens (strain ATCC 13124 / DSM 756 / JCM 1290 / NCIMB 6125 / NCTC 8237 / Type A).